The sequence spans 146 residues: UPF0735 ACT domain-containing protein TTE2621 (146 aa).

Residues 71 to 146 (TFSMVLEHMP…GVRKIEVLGE (76 aa)) enclose the ACT domain.

This sequence belongs to the UPF0735 family.

The chain is UPF0735 ACT domain-containing protein TTE2621 from Caldanaerobacter subterraneus subsp. tengcongensis (strain DSM 15242 / JCM 11007 / NBRC 100824 / MB4) (Thermoanaerobacter tengcongensis).